The following is a 138-amino-acid chain: Small ribosomal subunit protein uS11c (138 aa).

The interval 1 to 23 (MAKAIPRRSSRRNGRIGSRKSAR) is disordered.

It belongs to the universal ribosomal protein uS11 family. As to quaternary structure, part of the 30S ribosomal subunit.

Its subcellular location is the plastid. It is found in the chloroplast. The chain is Small ribosomal subunit protein uS11c from Ipomoea purpurea (Common morning glory).